The sequence spans 118 residues: Ribonuclease P protein component (118 aa).

This sequence belongs to the RnpA family. In terms of assembly, consists of a catalytic RNA component (M1 or rnpB) and a protein subunit.

The enzyme catalyses Endonucleolytic cleavage of RNA, removing 5'-extranucleotides from tRNA precursor.. In terms of biological role, RNaseP catalyzes the removal of the 5'-leader sequence from pre-tRNA to produce the mature 5'-terminus. It can also cleave other RNA substrates such as 4.5S RNA. The protein component plays an auxiliary but essential role in vivo by binding to the 5'-leader sequence and broadening the substrate specificity of the ribozyme. The chain is Ribonuclease P protein component from Rickettsia akari (strain Hartford).